The chain runs to 334 residues: N-acetyl-S-alkylcysteine monooxygenase (334 aa).

The protein to bacterial alkanal monooxygenase alpha and beta chains.

It catalyses the reaction N-acetyl-S-benzyl-L-cysteine + FMNH2 + O2 = (R)-N-acetyl-S-benzyl-L-cysteine sulfoxide + FMN + H2O + H(+). The enzyme catalyses N-acetyl-S-methyl-L-cysteine + FMNH2 + O2 = (R)-N-acetyl-S-methyl-L-cysteine sulfoxide + FMN + H2O + H(+). Its pathway is amino-acid metabolism. Its function is as follows. Involved in a cysteine salvage pathway from S-alkylcysteine. Catalyzes the oxidation of N-acetyl-S-benzyl-L-cysteine and N-acetyl-S-methyl-L-cysteine to (R)-N-acetyl-S-benzyl-L-cysteine sulfoxide and (R)-N-acetyl-S-methyl-L-cysteine sulfoxide, respectively. This pathway is likely important in the catabolism of alkylated cysteine generated by proteolysis of alkylated glutathione formed in the detoxification of a wide range of electrophiles. The polypeptide is N-acetyl-S-alkylcysteine monooxygenase (Bacillus subtilis (strain 168)).